A 151-amino-acid chain; its full sequence is Protein SprT-like (151 aa).

The SprT-like domain maps to 7 to 147 (QKLTESISES…GKCKGKLHLH (141 aa)). Residue His67 participates in Zn(2+) binding. Glu68 is a catalytic residue. Residue His71 coordinates Zn(2+).

It belongs to the SprT family. The cofactor is Zn(2+).

The protein resides in the cytoplasm. The polypeptide is Protein SprT-like (Staphylococcus carnosus (strain TM300)).